We begin with the raw amino-acid sequence, 58 residues long: Large ribosomal subunit protein uL30 (58 aa).

It belongs to the universal ribosomal protein uL30 family. Part of the 50S ribosomal subunit.

The polypeptide is Large ribosomal subunit protein uL30 (Pseudomonas entomophila (strain L48)).